Consider the following 395-residue polypeptide: Phosphoglycerate kinase (395 aa).

Substrate is bound by residues 20-22 (DFN), R36, 59-62 (HLGR), R120, and R157. Residues K208, G296, E327, and 353–356 (GGDT) each bind ATP.

Belongs to the phosphoglycerate kinase family. Monomer.

It localises to the cytoplasm. It catalyses the reaction (2R)-3-phosphoglycerate + ATP = (2R)-3-phospho-glyceroyl phosphate + ADP. The protein operates within carbohydrate degradation; glycolysis; pyruvate from D-glyceraldehyde 3-phosphate: step 2/5. The chain is Phosphoglycerate kinase from Tropheryma whipplei (strain Twist) (Whipple's bacillus).